The following is a 330-amino-acid chain: MEAVPSSDSYPAVENEHLQETPESNNSVYTSFMKSHRCYDLIPTSSKLVVFDTSLQVKKAFFALVTNGVRAAPLWDSKKQSFVGMLTITDFINILHRYYKSALVQIYELEEHKIETWREVYLQDSFKPLVCISPNASLFDAVSSLIRNKIHRLPVIDPESGNTLYILTHKRILKFLKLFITEFPKPEFMSKSLEELQIGTYANIAMVRTTTPVYVALGIFVQHRVSALPVVDEKGRVVDIYSKFDVINLAAEKTYNNLDVSVTKALQHRSHYFEGVLKCYLHETLETIINRLVEAEVHRLVVVDENDVVKGIVSLSDILQALVLTGGEKP.

The disordered stretch occupies residues 1-24; sequence MEAVPSSDSYPAVENEHLQETPES. 3 CBS domains span residues 43–103, 125–187, and 198–260; these read PTSS…KSAL, SFKP…PKPE, and IGTY…NLDV. ADP is bound by residues arginine 70, 85–90, valine 130, 151–152, and lysine 170; these read MLTITD and HR. AMP is bound by residues arginine 70, 85 to 90, valine 130, histidine 151, 151 to 152, lysine 170, threonine 200, alanine 205, 226 to 227, and 242 to 245; these read MLTITD, HR, SA, and SKFD. ATP contacts are provided by residues arginine 70, 85-90, valine 130, 151-152, arginine 152, and lysine 170; these read MLTITD and HR. Residues 138-159 carry the AMPK pseudosubstrate motif; that stretch reads LFDAVSSLIRNKIHRLPVIDPE. An ADP-binding site is contributed by 242 to 245; sequence SKFD. 242–245 is a binding site for ATP; sequence SKFD. A Phosphoserine; by ULK1 modification is found at serine 261. Position 263 is a phosphothreonine; by ULK1 (threonine 263). Position 269 (arginine 269) interacts with ADP. Residue arginine 269 participates in AMP binding. Position 269 (arginine 269) interacts with ATP. Serine 270 bears the Phosphoserine; by ULK1 mark. A CBS 4 domain is found at 272–329; that stretch reads YFEGVLKCYLHETLETIINRLVEAEVHRLVVVDENDVVKGIVSLSDILQALVLTGGEK. Residues leucine 277 and 298–299 each bind ADP; that span reads HR. AMP-binding positions include leucine 277, histidine 298, 298-299, and 314-317; these read HR and SLSD. Residues leucine 277 and 298–299 each bind ATP; that span reads HR.

This sequence belongs to the 5'-AMP-activated protein kinase gamma subunit family. AMPK is a heterotrimer of an alpha catalytic subunit (PRKAA1 or PRKAA2), a beta (PRKAB1 or PRKAB2) and a gamma non-catalytic subunits (PRKAG1, PRKAG2 or PRKAG3). Interacts with FNIP1 and FNIP2. Phosphorylated by ULK1 and ULK2; leading to negatively regulate AMPK activity and suggesting the existence of a regulatory feedback loop between ULK1, ULK2 and AMPK. In terms of processing, glycosylated; O-GlcNAcylated by OGT, promoting the AMP-activated protein kinase (AMPK) activity.

Functionally, AMP/ATP-binding subunit of AMP-activated protein kinase (AMPK), an energy sensor protein kinase that plays a key role in regulating cellular energy metabolism. In response to reduction of intracellular ATP levels, AMPK activates energy-producing pathways and inhibits energy-consuming processes: inhibits protein, carbohydrate and lipid biosynthesis, as well as cell growth and proliferation. AMPK acts via direct phosphorylation of metabolic enzymes, and by longer-term effects via phosphorylation of transcription regulators. Also acts as a regulator of cellular polarity by remodeling the actin cytoskeleton; probably by indirectly activating myosin. Gamma non-catalytic subunit mediates binding to AMP, ADP and ATP, leading to activate or inhibit AMPK: AMP-binding results in allosteric activation of alpha catalytic subunit (PRKAA1 or PRKAA2) both by inducing phosphorylation and preventing dephosphorylation of catalytic subunits. ADP also stimulates phosphorylation, without stimulating already phosphorylated catalytic subunit. ATP promotes dephosphorylation of catalytic subunit, rendering the AMPK enzyme inactive. The polypeptide is 5'-AMP-activated protein kinase subunit gamma-1 (PRKAG1) (Bos taurus (Bovine)).